The sequence spans 225 residues: UPF0758 protein BCQ_4241 (225 aa).

The region spanning 103-225 (SIRSPEDCAR…FVSLKEKGHI (123 aa)) is the MPN domain. The Zn(2+) site is built by H174, H176, and D187. The JAMM motif motif lies at 174 to 187 (HNHPSGDPAPSRED).

Belongs to the UPF0758 family.

In Bacillus cereus (strain Q1), this protein is UPF0758 protein BCQ_4241.